The sequence spans 137 residues: Phosphatidylinositol N-acetylglucosaminyltransferase subunit P (137 aa).

Transmembrane regions (helical) follow at residues 16–36 (VYGF…LIWG) and 58–78 (MAMP…YIGL).

Belongs to the PIGP family.

The protein resides in the membrane. It carries out the reaction a 1,2-diacyl-sn-glycero-3-phospho-(1D-myo-inositol) + UDP-N-acetyl-alpha-D-glucosamine = a 6-(N-acetyl-alpha-D-glucosaminyl)-1-(1,2-diacyl-sn-glycero-3-phospho)-1D-myo-inositol + UDP + H(+). It participates in glycolipid biosynthesis; glycosylphosphatidylinositol-anchor biosynthesis. Its function is as follows. Part of the complex catalyzing the transfer of N-acetylglucosamine from UDP-N-acetylglucosamine to phosphatidylinositol, the first step of GPI biosynthesis. This Arabidopsis thaliana (Mouse-ear cress) protein is Phosphatidylinositol N-acetylglucosaminyltransferase subunit P.